Consider the following 323-residue polypeptide: MAALIAENFRFLSLFFKSKDVMIFNGLVALGTVGSQELFTVVAFHCPCSPARNYLYGLAAIGVPALALFLIGVILNNHTWNLVAECQYRRTKNCSAAPNFLLLSSIVGRAAVAPVTWSVISLLRGEAYVCALSEFVNPHSLMVGERSFPVAHATEILARFPCGEGPANLSVFREEVSRRLKYESQLFGWLLIGVVAILVFLTKCLKHYCSPLSYRQEAYWAQYRANEDQLFQRTAEVHSRVLAANNVRRFFGFVALDKDDEELVAKFPVEGTQPRLQWNAITGVYLYRENQGLPLYSRLHKWAQGVVGNGMTPDHVEMSLLPS.

At 1-21 the chain is on the cytoplasmic side; that stretch reads MAALIAENFRFLSLFFKSKDV. The central pore stretch occupies residues 14 to 39; it reads LFFKSKDVMIFNGLVALGTVGSQELF. The chain crosses the membrane as a helical span at residues 22–43; the sequence is MIFNGLVALGTVGSQELFTVVA. Topologically, residues 44–52 are extracellular; the sequence is FHCPCSPAR. Cystine bridges form between Cys46/Cys130 and Cys48/Cys162. A helical membrane pass occupies residues 53-76; it reads NYLYGLAAIGVPALALFLIGVILN. At 77–101 the chain is on the cytoplasmic side; that stretch reads NHTWNLVAECQYRRTKNCSAAPNFL. The helical transmembrane segment at 102 to 132 threads the bilayer; it reads LLSSIVGRAAVAPVTWSVISLLRGEAYVCAL. The Extracellular segment spans residues 133–179; that stretch reads SEFVNPHSLMVGERSFPVAHATEILARFPCGEGPANLSVFREEVSRR. Positions 145 to 152 are hemichannel docking; it reads ERSFPVAH. The helical transmembrane segment at 180–206 threads the bilayer; that stretch reads LKYESQLFGWLLIGVVAILVFLTKCLK. At 207–323 the chain is on the cytoplasmic side; the sequence is HYCSPLSYRQ…DHVEMSLLPS (117 aa). Residues 214 to 251 form an intersubunit interaction region; the sequence is YRQEAYWAQYRANEDQLFQRTAEVHSRVLAANNVRRFF.

It belongs to the CALHM family. In terms of assembly, homo-undecamer. Two undecameric hemichannels can assemble in a head-to-head manner to form a gap junction.

Its subcellular location is the cell membrane. It carries out the reaction ATP(in) = ATP(out). Functionally, pore-forming subunit of Ca(2+) homeostasis modulator channels. Mediates ATP release from astrocytes and ATP-induced Ca(2+) influx in microglia thus regulating neuronal ATP and Ca(2+) homeostasis, synaptic transmission and neuroinflammatory response. May form intercellular gap junctions. The gating mechanism remains unknown. The sequence is that of Calcium homeostasis modulator protein 2 (CALHM2) from Bos taurus (Bovine).